We begin with the raw amino-acid sequence, 644 residues long: Exoribonuclease 2 (644 aa).

Residues 189 to 516 (REDLTALDFV…NHRLLKAVIK (328 aa)) enclose the RNB domain. Residues 561-643 (GTRFAAEIVD…ETRGIIARPV (83 aa)) form the S1 motif domain.

This sequence belongs to the RNR ribonuclease family. RNase II subfamily.

It localises to the cytoplasm. It catalyses the reaction Exonucleolytic cleavage in the 3'- to 5'-direction to yield nucleoside 5'-phosphates.. Its function is as follows. Involved in mRNA degradation. Hydrolyzes single-stranded polyribonucleotides processively in the 3' to 5' direction. This chain is Exoribonuclease 2, found in Shigella sonnei (strain Ss046).